A 1226-amino-acid chain; its full sequence is Probable phosphorylase b kinase regulatory subunit alpha (1226 aa).

The disordered stretch occupies residues 666–688 (NEKITTPRGPRTLRRGESVKDRS). A compositionally biased stretch (basic and acidic residues) spans 679–688 (RRGESVKDRS).

It belongs to the phosphorylase b kinase regulatory chain family.

It participates in glycan biosynthesis; glycogen metabolism. In terms of biological role, phosphorylase b kinase catalyzes the phosphorylation of serine in certain substrates, including troponin I. The alpha chain may bind calmodulin. This chain is Probable phosphorylase b kinase regulatory subunit alpha, found in Caenorhabditis elegans.